The chain runs to 173 residues: T-cell surface glycoprotein CD3 delta chain (173 aa).

The N-terminal stretch at 1-21 (MEHSGILASLILIAVLPQGSP) is a signal peptide. The Extracellular segment spans residues 22–105 (FKIQVTEYED…CVELDSGTMA (84 aa)). A disulfide bridge connects residues Cys37 and Cys73. N-linked (GlcNAc...) asparagine glycans are attached at residues Asn38, Asn55, and Asn74. A helical transmembrane segment spans residues 106 to 126 (GVIFIDLIATLLLALGVYCFA). Residues 127-173 (GHETGRPSGAAEVQALLKNEQLYQPLRDREDTQYSRLGGNWPRNKKS) are Cytoplasmic-facing. Residues 138–166 (EVQALLKNEQLYQPLRDREDTQYSRLGGN) enclose the ITAM domain. 2 positions are modified to phosphotyrosine: Tyr149 and Tyr160.

As to quaternary structure, the TCR-CD3 complex is composed of a CD3D/CD3E and a CD3G/CD3E heterodimers that preferentially associate with TCRalpha and TCRbeta, respectively, to form TCRalpha/CD3E/CD3G and TCRbeta/CD3G/CD3E trimers. In turn, the hexamer interacts with CD3Z homodimer to form the TCR-CD3 complex. Alternatively, TCRalpha and TCRbeta can be replaced by TCRgamma and TCRdelta. Interacts with coreceptors CD4 and CD8. In terms of processing, phosphorylated on Tyr residues after T-cell receptor triggering by LCK in association with CD4/CD8.

It localises to the membrane. In terms of biological role, part of the TCR-CD3 complex present on T-lymphocyte cell surface that plays an essential role in adaptive immune response. When antigen presenting cells (APCs) activate T-cell receptor (TCR), TCR-mediated signals are transmitted across the cell membrane by the CD3 chains CD3D, CD3E, CD3G and CD3Z. All CD3 chains contain immunoreceptor tyrosine-based activation motifs (ITAMs) in their cytoplasmic domain. Upon TCR engagement, these motifs become phosphorylated by Src family protein tyrosine kinases LCK and FYN, resulting in the activation of downstream signaling pathways. In addition of this role of signal transduction in T-cell activation, CD3D plays an essential role in thymocyte differentiation. Indeed, participates in correct intracellular TCR-CD3 complex assembly and surface expression. In absence of a functional TCR-CD3 complex, thymocytes are unable to differentiate properly. Interacts with CD4 and CD8 and thus serves to establish a functional link between the TCR and coreceptors CD4 and CD8, which is needed for activation and positive selection of CD4 or CD8 T-cells. The polypeptide is T-cell surface glycoprotein CD3 delta chain (Cd3d) (Mus musculus (Mouse)).